Here is a 190-residue protein sequence, read N- to C-terminus: Hypoxanthine/guanine phosphoribosyltransferase (190 aa).

This sequence belongs to the purine/pyrimidine phosphoribosyltransferase family. Archaeal HPRT subfamily. Homodimer.

Its subcellular location is the cytoplasm. It catalyses the reaction IMP + diphosphate = hypoxanthine + 5-phospho-alpha-D-ribose 1-diphosphate. It carries out the reaction GMP + diphosphate = guanine + 5-phospho-alpha-D-ribose 1-diphosphate. The protein operates within purine metabolism; IMP biosynthesis via salvage pathway; IMP from hypoxanthine: step 1/1. Its function is as follows. Catalyzes a salvage reaction resulting in the formation of IMP that is energically less costly than de novo synthesis. The protein is Hypoxanthine/guanine phosphoribosyltransferase of Methanohalophilus mahii (strain ATCC 35705 / DSM 5219 / SLP).